The sequence spans 750 residues: MAKPRLLVLYFALIVVPAWVSSIVLTGTSEPPDAQTVAPAEDETLQNEADNQENVLSQLLGDYDKVKAMSEGSDCQCKCVVRPLGRDACQRINAGASRKEDFYTVETITSGSSCKCACVAPPSALNPCEGDFRLQKLREADSQDLKLSTIIDMLEGAFYGLDLLKLHSVTTKLVGRVDKLEEEVSKNLTKENEQIKEDMEEIRTEMNKRGKENCSENILDSMPDIRSALQRDAAAAYAHPEYEERFLQEETVSQQINSIELLQTRPLALPEVVKSQRPLQRQVHLRGRPASQPTVIRGITYYKAKVSEEENDIEEQQDEFFSGDNGVDLLIEDQLLRHNGLMTSVTRRPAATRQGHSTAVTSDLNARTAPWSSALPQPSTSDPSIANHASVGPTLQTTSVSPDPTRESVLQPSPQVPATTVAHTATQQPAAPAPPAVSPREALMEAMHTVPVPPTTVRTDSLGKDAPAGWGTTPASPTLSPEEEDDIRNVIGRCKDTLSTITGPTTQNTYGRNEGAWMKDPLAKDERIYVTNYYYGNTLVEFRNLENFKQGRWSNSYKLPYSWIGTGHVVYNGAFYYNRAFTRNIIKYDLKQRYVAAWAMLHDVAYEEATPWRWQGHSDVDFAVDENGLWLIYPALDDEGFSQEVIVLSKLNAADLSTQKETTWRTGLRRNFYGNCFVICGVLYAVDSYNQRNANISYAFDTHTNTQIVPRLLFENEYSYTTQIDYNPKDRLLYAWDNGHQVTYHVIFAY.

An N-terminal signal peptide occupies residues 1–22; it reads MAKPRLLVLYFALIVVPAWVSS. Coiled-coil stretches lie at residues 40-68 and 179-213; these read AEDE…KVKA and KLEE…GKEN. Residues asparagine 187 and asparagine 213 are each glycosylated (N-linked (GlcNAc...) asparagine). 2 disordered regions span residues 346–437 and 452–484; these read TRRP…PPAV and VPPT…PEEE. Composition is skewed to polar residues over residues 354–384 and 393–413; these read QGHS…SDPS and PTLQ…LQPS. A compositionally biased stretch (low complexity) spans 416–430; that stretch reads VPATTVAHTATQQPA. Residues 493 to 750 form the Olfactomedin-like domain; it reads RCKDTLSTIT…QVTYHVIFAY (258 aa). The cysteines at positions 494 and 680 are disulfide-linked. An N-linked (GlcNAc...) asparagine glycan is attached at asparagine 695.

Homodimer. Binds to heparin and chondroitin sulfate E. In terms of processing, O-glycosylated and N-glycosylated.

It localises to the secreted. This is Olfactomedin-like protein 2B (OLFML2B) from Homo sapiens (Human).